Reading from the N-terminus, the 142-residue chain is Sec-independent protein translocase protein TatB (142 aa).

Residues 1–21 traverse the membrane as a helical segment; it reads MFDIGASELLVLVIVAIVVIG. Residues 75–142 form a disordered region; sequence RETAAQETAA…PAARPGSQQP (68 aa). Low complexity predominate over residues 76–94; the sequence is ETAAQETAAAQGQTPAAAE. Positions 123–133 are enriched in basic and acidic residues; sequence AKVEARVEEAP.

This sequence belongs to the TatB family. As to quaternary structure, the Tat system comprises two distinct complexes: a TatABC complex, containing multiple copies of TatA, TatB and TatC subunits, and a separate TatA complex, containing only TatA subunits. Substrates initially bind to the TatABC complex, which probably triggers association of the separate TatA complex to form the active translocon.

It is found in the cell inner membrane. Part of the twin-arginine translocation (Tat) system that transports large folded proteins containing a characteristic twin-arginine motif in their signal peptide across membranes. Together with TatC, TatB is part of a receptor directly interacting with Tat signal peptides. TatB may form an oligomeric binding site that transiently accommodates folded Tat precursor proteins before their translocation. The chain is Sec-independent protein translocase protein TatB from Novosphingobium aromaticivorans (strain ATCC 700278 / DSM 12444 / CCUG 56034 / CIP 105152 / NBRC 16084 / F199).